A 297-amino-acid polypeptide reads, in one-letter code: MEINGVEIEDTFAEAFGIKVSRVLVTAATKKLAKIAATEATGYGTSVIGCPAEAGIDCYVPPEETPDGRPGYIIMICNPSKKSLDHELLERIGMGILTAPTTAVFDALDDEDEKLNIGFKLKFFGDGYEKELEIDGRKIHSIPIMSGDFLIESEFGIKDGVAGGNFFIMGDSQASALLAAQAAVDAIAAVEGTVTPFPGGVVASGSKVGSNKYKFLNASTNEKMCVTLKDEVEDTQIPENVNGVYEIVIDGVDEEAVREAMKEGIKAACTVPGIIKISAGNYGGNLGAYKIKLHDLF.

This sequence belongs to the FTR family. In terms of assembly, homotetramer.

Its subcellular location is the cytoplasm. It carries out the reaction N-formylmethanofuran + 5,6,7,8-tetrahydromethanopterin + H(+) = N(5)-formyl-5,6,7,8-tetrahydromethanopterin + methanofuran. The protein operates within one-carbon metabolism; methanogenesis from CO(2); 5,10-methenyl-5,6,7,8-tetrahydromethanopterin from CO(2): step 2/3. Functionally, catalyzes the reversible transfer of a formyl group from formylmethanofuran (formyl-MFR) to tetrahydromethanopterin (H(4)MPT) to produce 5-formyl tetrahydromethanopterin (5-formyl-H(4)MPT) and methanofuran (MFR). This chain is Formylmethanofuran--tetrahydromethanopterin formyltransferase, found in Methanothermobacter thermautotrophicus (strain ATCC 29096 / DSM 1053 / JCM 10044 / NBRC 100330 / Delta H) (Methanobacterium thermoautotrophicum).